A 78-amino-acid polypeptide reads, in one-letter code: MDQHNNGVSTLVAGQFALPSHATFGLGDRVRKKSGAAWQGQVVGWYCTKLTPEGYAVESESHPGSVQIYPVAALERVA.

Residues Lys-32 and 66–69 (VQIY) contribute to the NADP(+) site. Ile-68 contributes to the substrate binding site.

As to quaternary structure, homotetramer.

It catalyses the reaction (6S)-5,6,7,8-tetrahydrofolate + NADP(+) = 7,8-dihydrofolate + NADPH + H(+). Its pathway is cofactor biosynthesis; tetrahydrofolate biosynthesis; 5,6,7,8-tetrahydrofolate from 7,8-dihydrofolate: step 1/1. Its function is as follows. Key enzyme in folate metabolism. Catalyzes an essential reaction for de novo glycine and purine synthesis, and for DNA precursor synthesis. This chain is Dihydrofolate reductase type 2, found in Escherichia coli.